A 189-amino-acid chain; its full sequence is Small ribosomal subunit protein uS5 (189 aa).

The S5 DRBM domain maps to 23-86 (FIDKLVHINR…ESAKREMIYV (64 aa)).

The protein belongs to the universal ribosomal protein uS5 family. In terms of assembly, part of the 30S ribosomal subunit. Contacts proteins S4 and S8.

In terms of biological role, with S4 and S12 plays an important role in translational accuracy. Located at the back of the 30S subunit body where it stabilizes the conformation of the head with respect to the body. This chain is Small ribosomal subunit protein uS5, found in Bartonella bacilliformis (strain ATCC 35685 / KC583 / Herrer 020/F12,63).